We begin with the raw amino-acid sequence, 700 residues long: MLKMLSFKLLLLAVALGFFEGDAKFGERNEGSGARRRRCLNGNPPKRLKRRDRRVMSQLELLSGGEILCGGFYPRVSCCLQSDSPGLGRLENKIFSATNNSECSRLLEEIQCAPCSPHSQSLFYTPERDVLDGDLALPLLCKDYCKEFFYTCRGHIPGLLQTTADEFCFYYARKDAGLCFPDFPRKQVRGPASNYLGQMEDYEKVGGISRKHKHNCLCVQEVMSGLRQPVSAVHSGDGSHRLFILEKEGYVKILTPEGELFKEPYLDIHKLVQSGIKGGDERGLLSLAFHPNYKKNGKLYVSYTTNQERWAIGPHDHILRVVEYTVSRKNPHQVDVRTARVFLEVAELHRKHLGGQLLFGPDGFLYIILGDGMITLDDMEEMDGLSDFTGSVLRLDVDTDMCNVPYSIPRSNPHFNSTNQPPEVFAHGLHDPGRCAVDRHPTDININLTILCSDSNGKNRSSARILQIIKGRDYESEPSLLEFKPFSNGPLVGGFVYRGCQSERLYGSYVFGDRNGNFLTLQQSPVTKQWQEKPLCLGASSSCRGYFSGHILGFGEDELGEVYILSSSKSMTQTHNGKLYKIVDPKRPLMPEECRVTVQPAQPLTSDCSRLCRNGYYTPTGKCCCSPGWEGDFCRIAKCEPACRHGGVCVRPNKCLCKKGYLGPQCEQVDRNVRRVTRAGILDQIIDMTSYLLDLTSYIV.

The N-terminal stretch at 1 to 17 (MLKMLSFKLLLLAVALG) is a signal peptide. The N-linked (GlcNAc...) asparagine glycan is linked to N99. Cystine bridges form between C216-C536, C218-C543, C402-C624, C435-C452, C500-C594, C612-C623, C625-C634, C639-C649, C643-C655, and C657-C666. The segment at 376-388 (LDDMEEMDGLSDF) is interaction with SHH zinc binding site. D383 provides a ligand contact to Zn(2+). N-linked (GlcNAc...) asparagine glycans are attached at residues N416, N447, and N459. 2 consecutive EGF-like domains span residues 607–634 (DCSR…GDFC) and 635–667 (RIAK…PQCE).

Belongs to the HHIP family. As to quaternary structure, interacts with all three hedgehog family members, SHH, IHH and DHH. As to expression, in the adult brain, high expression found in the ventral cochlear nucleus, medial habenula, indusium griseum and tenia tecta. Some expression also in the caudate putamen, the nucleus accumbens, the ventral pallidum and in the superficial layers of the superior colliculus.

The protein localises to the cell membrane. Its subcellular location is the secreted. Its function is as follows. Modulates hedgehog signaling in several cell types, including brain and lung through direct interaction with members of the hedgehog family. Soluble forms inhibit Shh-induced differentiation in the fibroblast cell line C3H/10T1/2. This is Hedgehog-interacting protein (Hhip) from Mus musculus (Mouse).